Consider the following 609-residue polypeptide: MFS siderochrome iron transporter 1 (609 aa).

Composition is skewed to basic and acidic residues over residues 1 to 17 (MSALTKIREGLAREDNT) and 25 to 34 (PHEKEIHETP). Residues 1-69 (MSALTKIREG…NDSDVPSEDV (69 aa)) are disordered. 14 helical membrane-spanning segments follow: residues 81 to 101 (LTWGKGSLAALLCLIWTLFLI), 125 to 145 (LMTTIPIVSDAMTAACYIPMA), 154 to 174 (AEGFLLMSGFATLGLILMAVS), 182 to 202 (AAQVFYSVGWGGMIYAVGVLA), 220 to 240 (SPYMITAFAGSKAAAAFVIDV), 245 to 265 (WGFGWIALVLPCVTIPLFLVL), 300 to 320 (VIGIFLFGGGLVVFLLPFNLA), 329 to 349 (TGYIIAMIIVGFCTLIFFGVW), 368 to 390 (SVVAACMIDLTYQVSYYTWNYFF), 407 to 427 (YVNSTFQVVSGVLLFIVGFLI), 432 to 452 (FYKWTFYFAVPIYIFALGLMI), 469 to 489 (IFISIGGAVFILVMQLAVLAA), 496 to 516 (AAALATLYVAGGVGGAVGGAI), and 573 to 593 (IRMLAAGVGIASLFFIWVPML).

It belongs to the major facilitator superfamily.

It localises to the cell membrane. In terms of biological role, major facilitator transporter involved in extracellular siderophore uptake. Gibberella zeae produces extracellular coprogen-type siderophores as well as the intracellular siderophore ferricrocin. The role of extracellular siderophores is to supply iron to the fungus during plant infection, and the intracellular ferricrocin is required for intracellular iron distribution and storage with a crucial role in ascus and ascospore development. The protein is MFS siderochrome iron transporter 1 of Gibberella zeae (strain ATCC MYA-4620 / CBS 123657 / FGSC 9075 / NRRL 31084 / PH-1) (Wheat head blight fungus).